The sequence spans 471 residues: Cysteine--tRNA ligase (471 aa).

Residue C29 coordinates Zn(2+). A 'HIGH' region motif is present at residues 31–41 (LTVQSEPHVGH). C215, H240, and E244 together coordinate Zn(2+). Residues 271-275 (KMSKS) carry the 'KMSKS' region motif. Residue K274 participates in ATP binding.

It belongs to the class-I aminoacyl-tRNA synthetase family. Monomer. The cofactor is Zn(2+).

The protein localises to the cytoplasm. The enzyme catalyses tRNA(Cys) + L-cysteine + ATP = L-cysteinyl-tRNA(Cys) + AMP + diphosphate. The sequence is that of Cysteine--tRNA ligase from Nocardioides sp. (strain ATCC BAA-499 / JS614).